The following is a 481-amino-acid chain: Glutamate--tRNA ligase (481 aa).

The 'HIGH' region motif lies at 10-20 (PSPTGHLHIGN). The 'KMSKS' region motif lies at 251 to 255 (KLSKR). Lysine 254 contacts ATP.

This sequence belongs to the class-I aminoacyl-tRNA synthetase family. Glutamate--tRNA ligase type 1 subfamily. In terms of assembly, monomer.

It localises to the cytoplasm. The catalysed reaction is tRNA(Glu) + L-glutamate + ATP = L-glutamyl-tRNA(Glu) + AMP + diphosphate. Catalyzes the attachment of glutamate to tRNA(Glu) in a two-step reaction: glutamate is first activated by ATP to form Glu-AMP and then transferred to the acceptor end of tRNA(Glu). In Exiguobacterium sibiricum (strain DSM 17290 / CCUG 55495 / CIP 109462 / JCM 13490 / 255-15), this protein is Glutamate--tRNA ligase.